We begin with the raw amino-acid sequence, 194 residues long: Outer-membrane lipoprotein LolB (194 aa).

Residues 1 to 18 form the signal peptide; it reads MTLLLRLFTLGCLLLLAG. Cys19 carries N-palmitoyl cysteine lipidation. The S-diacylglycerol cysteine moiety is linked to residue Cys19.

This sequence belongs to the LolB family. In terms of assembly, monomer.

The protein resides in the cell outer membrane. Its function is as follows. Plays a critical role in the incorporation of lipoproteins in the outer membrane after they are released by the LolA protein. The polypeptide is Outer-membrane lipoprotein LolB (Aeromonas hydrophila subsp. hydrophila (strain ATCC 7966 / DSM 30187 / BCRC 13018 / CCUG 14551 / JCM 1027 / KCTC 2358 / NCIMB 9240 / NCTC 8049)).